The primary structure comprises 105 residues: MVRYRMRSPSESPHQGPGQDHESEEQGQGQELNPERVEDYGRTHRGHHRHRRCSRKRLHRIHKRRRSCRRRRRHSCCHRRRHRRGCRRSRRRRRCRCRKCRRQCH.

Residues 1 to 74 are disordered; it reads MVRYRMRSPS…RRSCRRRRRH (74 aa). Phosphoserine occurs at positions 8 and 10. Basic and acidic residues predominate over residues 33-42; sequence NPERVEDYGR. Residues 43 to 74 are compositionally biased toward basic residues; sequence THRGHHRHRRCSRKRLHRIHKRRRSCRRRRRH.

This sequence belongs to the protamine P2 family. As to quaternary structure, interacts with TDRP. Post-translationally, proteolytic processing into mature chains is required for histone eviction during spermatogenesis. Transition proteins (TNP1 and TNP2) are required for processing. Testis.

It localises to the nucleus. The protein resides in the chromosome. Protamines substitute for histones in the chromatin of sperm during the haploid phase of spermatogenesis. They compact sperm DNA into a highly condensed, stable and inactive complex. The polypeptide is Protamine-2 (Prm2) (Rattus tunneyi (Tunney's rat)).